The sequence spans 371 residues: Ferrochelatase (371 aa).

Positions 218 and 299 each coordinate Fe cation.

It belongs to the ferrochelatase family.

The protein localises to the cytoplasm. The enzyme catalyses heme b + 2 H(+) = protoporphyrin IX + Fe(2+). It functions in the pathway porphyrin-containing compound metabolism; protoheme biosynthesis; protoheme from protoporphyrin-IX: step 1/1. Catalyzes the ferrous insertion into protoporphyrin IX. This Ralstonia pickettii (strain 12J) protein is Ferrochelatase.